A 341-amino-acid chain; its full sequence is GTPase Obg (341 aa).

Residues methionine 1–isoleucine 159 form the Obg domain. An OBG-type G domain is found at alanine 160–glutamate 327. GTP contacts are provided by residues glycine 166–serine 173, phenylalanine 191–tyrosine 195, aspartate 212–glycine 215, serine 279–aspartate 282, and serine 308–valine 310. Serine 173 and threonine 193 together coordinate Mg(2+).

It belongs to the TRAFAC class OBG-HflX-like GTPase superfamily. OBG GTPase family. In terms of assembly, monomer. Requires Mg(2+) as cofactor.

It localises to the cytoplasm. Its function is as follows. An essential GTPase which binds GTP, GDP and possibly (p)ppGpp with moderate affinity, with high nucleotide exchange rates and a fairly low GTP hydrolysis rate. Plays a role in control of the cell cycle, stress response, ribosome biogenesis and in those bacteria that undergo differentiation, in morphogenesis control. The sequence is that of GTPase Obg from Bartonella quintana (strain Toulouse) (Rochalimaea quintana).